Here is a 249-residue protein sequence, read N- to C-terminus: Coproheme decarboxylase (249 aa).

Fe-coproporphyrin III contacts are provided by residues arginine 131, 145–149, histidine 172, and glutamine 185; that span reads YPMDK. Residue tyrosine 145 is part of the active site.

Belongs to the ChdC family. Type 1 subfamily. Fe-coproporphyrin III is required as a cofactor.

It catalyses the reaction Fe-coproporphyrin III + 2 H2O2 + 2 H(+) = heme b + 2 CO2 + 4 H2O. It carries out the reaction Fe-coproporphyrin III + H2O2 + H(+) = harderoheme III + CO2 + 2 H2O. The catalysed reaction is harderoheme III + H2O2 + H(+) = heme b + CO2 + 2 H2O. Its pathway is porphyrin-containing compound metabolism; protoheme biosynthesis. Its function is as follows. Involved in coproporphyrin-dependent heme b biosynthesis. Catalyzes the decarboxylation of Fe-coproporphyrin III (coproheme) to heme b (protoheme IX), the last step of the pathway. The reaction occurs in a stepwise manner with a three-propionate intermediate. This Staphylococcus saprophyticus subsp. saprophyticus (strain ATCC 15305 / DSM 20229 / NCIMB 8711 / NCTC 7292 / S-41) protein is Coproheme decarboxylase.